The sequence spans 299 residues: ATP phosphoribosyltransferase (299 aa).

The protein belongs to the ATP phosphoribosyltransferase family. Long subfamily. Equilibrium between an active dimeric form, an inactive hexameric form and higher aggregates. Interconversion between the various forms is largely reversible and is influenced by the natural substrates and inhibitors of the enzyme. Requires Mg(2+) as cofactor.

It is found in the cytoplasm. The enzyme catalyses 1-(5-phospho-beta-D-ribosyl)-ATP + diphosphate = 5-phospho-alpha-D-ribose 1-diphosphate + ATP. It functions in the pathway amino-acid biosynthesis; L-histidine biosynthesis; L-histidine from 5-phospho-alpha-D-ribose 1-diphosphate: step 1/9. With respect to regulation, feedback inhibited by histidine. In terms of biological role, catalyzes the condensation of ATP and 5-phosphoribose 1-diphosphate to form N'-(5'-phosphoribosyl)-ATP (PR-ATP). Has a crucial role in the pathway because the rate of histidine biosynthesis seems to be controlled primarily by regulation of HisG enzymatic activity. This chain is ATP phosphoribosyltransferase, found in Yersinia pseudotuberculosis serotype O:1b (strain IP 31758).